Here is a 40-residue protein sequence, read N- to C-terminus: Trypsin inhibitor (40 aa).

In terms of assembly, monomer.

It carries out the reaction Preferential cleavage: Arg-|-Xaa, Lys-|-Xaa.. Functionally, inhibits trypsin but not chymotrypsin, papain or porcine pancreatic alpha-amylase. Has insecticidal activity against A.aegypti. Functions by inhibiting the A.aegypti midgut proteases to reduce the survival of larva and adults. This is Trypsin inhibitor from Cassia leiandra (Marimari).